Here is a 227-residue protein sequence, read N- to C-terminus: Guanylate kinase (227 aa).

A Guanylate kinase-like domain is found at 21-199 (GNLFMVVAPS…ALAELECIVA (179 aa)). 28–35 (APSGAGKS) provides a ligand contact to ATP.

This sequence belongs to the guanylate kinase family.

It localises to the cytoplasm. The catalysed reaction is GMP + ATP = GDP + ADP. Essential for recycling GMP and indirectly, cGMP. In Burkholderia orbicola (strain AU 1054), this protein is Guanylate kinase.